A 131-amino-acid chain; its full sequence is MSWQTYVDEHLMCEIEGHHLASAAILGHDGTVWAQSADFPQFKPEEITGIMKDFDEPGHLAPTGMFVAGAKYMVIQGEPGAVIRGKKGAGGITIKKTGQALVVGIYDEPMTPGQCNMVVERLGDYLVEQGM.

Cysteine 13 and cysteine 115 are joined by a disulfide. The short motif at 81–97 (AVIRGKKGAGGITIKKT) is the Involved in PIP2 interaction element. Threonine 111 carries the post-translational modification Phosphothreonine.

This sequence belongs to the profilin family. Occurs in many kinds of cells as a complex with monomeric actin in a 1:1 ratio. In terms of processing, phosphorylated by MAP kinases.

The protein resides in the cytoplasm. The protein localises to the cytoskeleton. In terms of biological role, binds to actin and affects the structure of the cytoskeleton. At high concentrations, profilin prevents the polymerization of actin, whereas it enhances it at low concentrations. By binding to PIP2, it inhibits the formation of IP3 and DG. In Phleum pratense (Common timothy), this protein is Profilin-2 (PRO2).